A 392-amino-acid chain; its full sequence is MKHIIHFDCFAGISGDMTVAALLDLGVPLEHLRDELARLDLPRDSYSLSIHRTERRHLAALRFDVQVLDQRTERGYAAIDGLIAASSLSGPVRERARAIFRRLAEAEALVHGVAVGEVHFHEVGAVDSIVDIVGTAICLDYLGVDGLSAAPLPLGSGFVHTAHGVLPVPAPATAELLKGMAVHGECGPGERVTPTGAAILAALATSVTAQPAMTVTAVGSGAGSRDFPDVPNILRAFLGRPEGEMSDGVLVAETNIDDSTPELLGYVMELLLEAGALDVFFTPIQMKKNRPGVQLSFLCRSGLLERLAALVLVETSAIGIRHYPVSRTTLERCMEERETPFGPLPFKLLFHDGRPLRAAPEYEACRRVARERGIPLQEVIRIVSQPTVVEGG.

Belongs to the LarC family.

The chain is Putative nickel insertion protein from Pelobacter propionicus (strain DSM 2379 / NBRC 103807 / OttBd1).